The primary structure comprises 106 residues: Putative cytochrome c oxidase subunit 7A3, mitochondrial (106 aa).

A mitochondrion-targeting transit peptide spans 1–23; sequence MLWNLLALHQIGQRTISTASHRH.

This sequence belongs to the cytochrome c oxidase VIIa family.

It localises to the mitochondrion inner membrane. This chain is Putative cytochrome c oxidase subunit 7A3, mitochondrial (COX7A2P2), found in Homo sapiens (Human).